We begin with the raw amino-acid sequence, 103 residues long: Large ribosomal subunit protein uL24 (103 aa).

It belongs to the universal ribosomal protein uL24 family. In terms of assembly, part of the 50S ribosomal subunit.

One of two assembly initiator proteins, it binds directly to the 5'-end of the 23S rRNA, where it nucleates assembly of the 50S subunit. In terms of biological role, one of the proteins that surrounds the polypeptide exit tunnel on the outside of the subunit. This is Large ribosomal subunit protein uL24 from Bacillus licheniformis (strain ATCC 14580 / DSM 13 / JCM 2505 / CCUG 7422 / NBRC 12200 / NCIMB 9375 / NCTC 10341 / NRRL NRS-1264 / Gibson 46).